The chain runs to 125 residues: Ribosome-binding factor A (125 aa).

This sequence belongs to the RbfA family. As to quaternary structure, monomer. Binds 30S ribosomal subunits, but not 50S ribosomal subunits or 70S ribosomes.

The protein localises to the cytoplasm. In terms of biological role, one of several proteins that assist in the late maturation steps of the functional core of the 30S ribosomal subunit. Associates with free 30S ribosomal subunits (but not with 30S subunits that are part of 70S ribosomes or polysomes). Required for efficient processing of 16S rRNA. May interact with the 5'-terminal helix region of 16S rRNA. The polypeptide is Ribosome-binding factor A (Wigglesworthia glossinidia brevipalpis).